Here is a 105-residue protein sequence, read N- to C-terminus: MVRYRMRSPSESPHQGPGQDHESEEQGQGQELNPERVEDYGRTHRGHHRHRRCSRKRLHRIHKRRRSCRRRRRHSCCHRRRHRRGCRRSRRRRRCRCRKCRRQCH.

Positions 1–74 (MVRYRMRSPS…RRSCRRRRRH (74 aa)) are disordered. 2 positions are modified to phosphoserine: Ser8 and Ser10. The span at 33 to 42 (NPERVEDYGR) shows a compositional bias: basic and acidic residues. Positions 43-74 (THRGHHRHRRCSRKRLHRIHKRRRSCRRRRRH) are enriched in basic residues.

The protein belongs to the protamine P2 family. As to quaternary structure, interacts with TDRP. In terms of processing, proteolytic processing into mature chains is required for histone eviction during spermatogenesis. Transition proteins (TNP1 and TNP2) are required for processing. Testis.

It localises to the nucleus. The protein resides in the chromosome. In terms of biological role, protamines substitute for histones in the chromatin of sperm during the haploid phase of spermatogenesis. They compact sperm DNA into a highly condensed, stable and inactive complex. This is Protamine-2 (Prm2) from Rattus tunneyi (Tunney's rat).